Reading from the N-terminus, the 182-residue chain is Ribosome-recycling factor (182 aa).

It belongs to the RRF family.

Its subcellular location is the cytoplasm. In terms of biological role, responsible for the release of ribosomes from messenger RNA at the termination of protein biosynthesis. May increase the efficiency of translation by recycling ribosomes from one round of translation to another. This chain is Ribosome-recycling factor, found in Nostoc punctiforme (strain ATCC 29133 / PCC 73102).